Reading from the N-terminus, the 119-residue chain is Small ribosomal subunit protein uS13 (119 aa).

The segment at 90–119 (IRHRRGLPLRGQRTRSNARTRKGKRKPIRS) is disordered. Residues 91–119 (RHRRGLPLRGQRTRSNARTRKGKRKPIRS) are compositionally biased toward basic residues.

Belongs to the universal ribosomal protein uS13 family. As to quaternary structure, part of the 30S ribosomal subunit. Forms a loose heterodimer with protein S19. Forms two bridges to the 50S subunit in the 70S ribosome.

Functionally, located at the top of the head of the 30S subunit, it contacts several helices of the 16S rRNA. In the 70S ribosome it contacts the 23S rRNA (bridge B1a) and protein L5 of the 50S subunit (bridge B1b), connecting the 2 subunits; these bridges are implicated in subunit movement. Contacts the tRNAs in the A and P-sites. In Coxiella burnetii (strain CbuK_Q154) (Coxiella burnetii (strain Q154)), this protein is Small ribosomal subunit protein uS13.